The following is a 757-amino-acid chain: Cellulose synthase-like protein B1 (757 aa).

2 helical membrane passes run 18–38 (TNYF…SLLL) and 50–70 (VWLV…LITC). Residue Asp136 is part of the active site. Positions 186 to 216 (EFNRDWEKTKREYEKLRRKVEDATGDSHMLD) form a coiled coil. Residue Asp462 is part of the active site. 6 consecutive transmembrane segments (helical) span residues 533-553 (LAYL…YCLL), 569-589 (LYLG…LWEF), 615-635 (LFSI…VFII), 674-694 (FLPG…FSVG), 710-730 (AEAC…MGLF), and 737-757 (TPLS…VFSV).

This sequence belongs to the glycosyltransferase 2 family. Plant cellulose synthase-like B subfamily. Expressed in young seedlings, primarily in the vascular tissue.

Its subcellular location is the golgi apparatus membrane. Thought to be a Golgi-localized beta-glycan synthase that polymerize the backbones of noncellulosic polysaccharides (hemicelluloses) of plant cell wall. This is Cellulose synthase-like protein B1 (CSLB1) from Arabidopsis thaliana (Mouse-ear cress).